Here is a 233-residue protein sequence, read N- to C-terminus: Opacity protein opA67 (233 aa).

Residue Ala1 is a signal peptide.

It belongs to the opacity porin family.

The protein resides in the cell outer membrane. Its function is as follows. Implicated in a number of adherence functions. OPA proteins are implicated in pathogenesis and are subject to phase variation. In Neisseria gonorrhoeae, this protein is Opacity protein opA67.